The chain runs to 144 residues: uncharacterized protein (144 aa).

Positions 24 to 67 (KLKELYQRLNQGINVEEVLKETVEDYKEKMEKYILEVLEEIEKY) form a coiled coil.

This is an uncharacterized protein from Aquifex aeolicus (strain VF5).